A 627-amino-acid polypeptide reads, in one-letter code: Neutral endopeptidase (627 aa).

Residues 1 to 627 (MTRIQDDLFA…RAPENRLKIW (627 aa)) form the Peptidase M13 domain. Zn(2+) is bound at residue histidine 475. The active site involves glutamate 476. Residues histidine 479 and glutamate 535 each coordinate Zn(2+). The Proton donor role is filled by aspartate 539.

This sequence belongs to the peptidase M13 family. Monomer. Zn(2+) serves as cofactor.

In terms of biological role, endopeptidase with broad substrate specificity for several oligopeptides. The sequence is that of Neutral endopeptidase (pepO) from Lactococcus lactis subsp. lactis (strain IL1403) (Streptococcus lactis).